Here is a 263-residue protein sequence, read N- to C-terminus: uncharacterized protein (263 aa).

The disordered stretch occupies residues 183 to 263; sequence APHDRPEGVP…PPSTNTKGAA (81 aa). Composition is skewed to polar residues over residues 230-239 and 253-263; these read SRPTAPSRPS and TPPSTNTKGAA.

In terms of biological role, probably does not play a direct role in plasmid integration or excision. This is an uncharacterized protein from Saccharopolyspora erythraea (Streptomyces erythraeus).